We begin with the raw amino-acid sequence, 483 residues long: tRNA (guanine(37)-N(1))-methyltransferase (483 aa).

Positions 1 to 24 (MEEAATLQSLSISSSSPFPNNSSP) are disordered. The segment covering 9-24 (SLSISSSSPFPNNSSP) has biased composition (low complexity). S-adenosyl-L-methionine contacts are provided by residues H252, 290 to 291 (DL), and N379.

The protein belongs to the class I-like SAM-binding methyltransferase superfamily. TRM5/TYW2 family. Monomer.

The protein resides in the mitochondrion matrix. The protein localises to the nucleus. Its subcellular location is the cytoplasm. The catalysed reaction is guanosine(37) in tRNA + S-adenosyl-L-methionine = N(1)-methylguanosine(37) in tRNA + S-adenosyl-L-homocysteine + H(+). Specifically methylates the N1 position of guanosine-37 in various cytoplasmic and mitochondrial tRNAs. Methylation is not dependent on the nature of the nucleoside 5' of the target nucleoside. This is the first step in the biosynthesis of wybutosine (yW), a modified base adjacent to the anticodon of tRNAs and required for accurate decoding. In Ajellomyces capsulatus (strain G186AR / H82 / ATCC MYA-2454 / RMSCC 2432) (Darling's disease fungus), this protein is tRNA (guanine(37)-N(1))-methyltransferase.